The following is a 184-amino-acid chain: Probable RNA 2'-phosphotransferase (184 aa).

It belongs to the KptA/TPT1 family.

Its function is as follows. Removes the 2'-phosphate from RNA via an intermediate in which the phosphate is ADP-ribosylated by NAD followed by a presumed transesterification to release the RNA and generate ADP-ribose 1''-2''-cyclic phosphate (APPR&gt;P). May function as an ADP-ribosylase. This Escherichia coli O6:K15:H31 (strain 536 / UPEC) protein is Probable RNA 2'-phosphotransferase.